A 435-amino-acid polypeptide reads, in one-letter code: Elongation factor 1-alpha (435 aa).

Residues 5–226 (KTHINLVVIG…DTMEPPKRPT (222 aa)) enclose the tr-type G domain. The segment at 14 to 21 (GHVDSGKS) is G1. GTP is bound at residue 14-21 (GHVDSGKS). The segment at 70-74 (GITID) is G2. The segment at 91-94 (DAPG) is G3. GTP is bound by residues 91 to 95 (DAPGH) and 151 to 154 (NKMD). A G4 region spans residues 151 to 154 (NKMD). The G5 stretch occupies residues 190–192 (SGF).

Belongs to the TRAFAC class translation factor GTPase superfamily. Classic translation factor GTPase family. EF-Tu/EF-1A subfamily.

Its subcellular location is the cytoplasm. This protein promotes the GTP-dependent binding of aminoacyl-tRNA to the A-site of ribosomes during protein biosynthesis. In Cryptosporidium parvum, this protein is Elongation factor 1-alpha.